The chain runs to 101 residues: Large ribosomal subunit protein uL24 (101 aa).

The protein belongs to the universal ribosomal protein uL24 family. As to quaternary structure, part of the 50S ribosomal subunit.

One of two assembly initiator proteins, it binds directly to the 5'-end of the 23S rRNA, where it nucleates assembly of the 50S subunit. Its function is as follows. One of the proteins that surrounds the polypeptide exit tunnel on the outside of the subunit. In Elusimicrobium minutum (strain Pei191), this protein is Large ribosomal subunit protein uL24.